A 255-amino-acid polypeptide reads, in one-letter code: Large ribosomal subunit protein uL4 (255 aa).

It belongs to the universal ribosomal protein uL4 family. Part of the 50S ribosomal subunit.

Its function is as follows. One of the primary rRNA binding proteins, this protein initially binds near the 5'-end of the 23S rRNA. It is important during the early stages of 50S assembly. It makes multiple contacts with different domains of the 23S rRNA in the assembled 50S subunit and ribosome. In terms of biological role, forms part of the polypeptide exit tunnel. In Thermococcus gammatolerans (strain DSM 15229 / JCM 11827 / EJ3), this protein is Large ribosomal subunit protein uL4.